The following is a 1392-amino-acid chain: DNA-directed RNA polymerase subunit beta (1392 aa).

It belongs to the RNA polymerase beta chain family. In terms of assembly, the RNAP catalytic core consists of 2 alpha, 1 beta, 1 beta' and 1 omega subunit. When a sigma factor is associated with the core the holoenzyme is formed, which can initiate transcription.

The catalysed reaction is RNA(n) + a ribonucleoside 5'-triphosphate = RNA(n+1) + diphosphate. In terms of biological role, DNA-dependent RNA polymerase catalyzes the transcription of DNA into RNA using the four ribonucleoside triphosphates as substrates. The chain is DNA-directed RNA polymerase subunit beta from Neisseria gonorrhoeae (strain NCCP11945).